Reading from the N-terminus, the 503-residue chain is Transmembrane protein 184C (503 aa).

7 helical membrane-spanning segments follow: residues 17–37 (LLILLYALAILVTVPVCIWEF), 48–68 (VWFIAGIFLLLTIPVSMCGIL), 83–103 (IIRILWMVPIYSLDSWVALKY), 115–135 (ECYEAYVIYNFMIFLTNYLTI), 212–232 (YLVILNNLSQLFAMYCLLLFY), 254–274 (VVFVSFWQAVLIALLVKVGVI), and 287–307 (AVATGLQDFIICIEMFFAAIA). Disordered stretches follow at residues 358 to 391 (PKKKCFPGDPDHNEHSSLLSASSQDSSKPSSPVG) and 479 to 503 (SPKPSDDIVIDFSDSPEGSDSSTDS). Over residues 373 to 388 (SSLLSASSQDSSKPSS) the composition is skewed to low complexity. Residues 494 to 503 (PEGSDSSTDS) show a composition bias toward polar residues.

Belongs to the TMEM184 family.

Its subcellular location is the membrane. Possible tumor suppressor which may play a role in cell growth. This Rattus norvegicus (Rat) protein is Transmembrane protein 184C (Tmem184c).